The sequence spans 376 residues: Lipoyl synthase, mitochondrial (376 aa).

C103, C108, C114, C134, C138, C141, and S349 together coordinate [4Fe-4S] cluster. One can recognise a Radical SAM core domain in the interval 119–338; sequence EHGTQTATIM…EDRGNQLGFL (220 aa).

Belongs to the radical SAM superfamily. Lipoyl synthase family. It depends on [4Fe-4S] cluster as a cofactor.

The protein resides in the mitochondrion. The catalysed reaction is [[Fe-S] cluster scaffold protein carrying a second [4Fe-4S](2+) cluster] + N(6)-octanoyl-L-lysyl-[protein] + 2 oxidized [2Fe-2S]-[ferredoxin] + 2 S-adenosyl-L-methionine + 4 H(+) = [[Fe-S] cluster scaffold protein] + N(6)-[(R)-dihydrolipoyl]-L-lysyl-[protein] + 4 Fe(3+) + 2 hydrogen sulfide + 2 5'-deoxyadenosine + 2 L-methionine + 2 reduced [2Fe-2S]-[ferredoxin]. The protein operates within protein modification; protein lipoylation via endogenous pathway; protein N(6)-(lipoyl)lysine from octanoyl-[acyl-carrier-protein]: step 2/2. Catalyzes the radical-mediated insertion of two sulfur atoms into the C-6 and C-8 positions of the octanoyl moiety bound to the lipoyl domains of lipoate-dependent enzymes, thereby converting the octanoylated domains into lipoylated derivatives. The chain is Lipoyl synthase, mitochondrial from Drosophila ananassae (Fruit fly).